Reading from the N-terminus, the 739-residue chain is Adenosylcobalamin-dependent ribonucleoside-triphosphate reductase (739 aa).

A disulfide bridge connects residues cysteine 119 and cysteine 419. The tract at residues 147–158 (SMPFSFLFDELM) is effector region-1. An effector region-2 region spans residues 168 to 313 (ARSNISQIPR…ICNLIGKAVV (146 aa)). Residues cysteine 408 and glutamate 410 contribute to the active site. An adenosylcobalamin-binding-1 region spans residues 565 to 626 (FHYGAYLIQR…NPNFASAGTV (62 aa)). An adenosylcobalamin-binding-2 region spans residues 685-724 (LQQAPKEPIDKETYEKRSQEITGNVEEVFSQLNSDVKDLE).

The protein belongs to the class II ribonucleoside-triphosphate reductase family. Monomer. Adenosylcob(III)alamin is required as a cofactor.

It catalyses the reaction a 2'-deoxyribonucleoside 5'-triphosphate + [thioredoxin]-disulfide + H2O = a ribonucleoside 5'-triphosphate + [thioredoxin]-dithiol. With respect to regulation, allosterically regulated by ATP and dNTP. The sequence is that of Adenosylcobalamin-dependent ribonucleoside-triphosphate reductase (rtpR) from Lactobacillus delbrueckii subsp. bulgaricus (strain ATCC BAA-365 / Lb-18).